The primary structure comprises 874 residues: Bifunctional apolipoprotein N-acyltransferase/polyprenol monophosphomannose synthase (874 aa).

Positions 1–593 (MKLGAWVAAQ…GRHRATSRSY (593 aa)) are apolipoprotein N-acyltransferase. Helical transmembrane passes span 23–42 (TRLV…FPPR), 72–89 (YGLL…PWIG), 94–115 (PGPW…GLFA), 177–194 (VALV…IEKW), and 206–223 (AVVL…AAIV). The CN hydrolase domain maps to 241-497 (VTVAVVQGNV…PAYLDSQVRL (257 aa)). Residue E294 is the Proton acceptor of the active site. K359 is an active-site residue. C409 functions as the Nucleophile in the catalytic mechanism. Residues 509–526 (PILQWILVGAAAAVVLVA) traverse the membrane as a helical segment. Disordered regions lie at residues 533–609 (FPRP…NRPS) and 852–874 (RARP…DVTE). Residues 594–874 (MTTGQPAPPA…SRVSRADVTE (281 aa)) form a polyprenol monophosphomannose synthase region.

In the N-terminal section; belongs to the CN hydrolase family. Apolipoprotein N-acyltransferase subfamily. The protein in the C-terminal section; belongs to the glycosyltransferase 2 family.

The protein localises to the cell membrane. It catalyses the reaction N-terminal S-1,2-diacyl-sn-glyceryl-L-cysteinyl-[lipoprotein] + a glycerophospholipid = N-acyl-S-1,2-diacyl-sn-glyceryl-L-cysteinyl-[lipoprotein] + a 2-acyl-sn-glycero-3-phospholipid + H(+). The catalysed reaction is a di-trans,poly-cis-dolichyl phosphate + GDP-alpha-D-mannose = a di-trans,poly-cis-dolichyl beta-D-mannosyl phosphate + GDP. It functions in the pathway protein modification; lipoprotein biosynthesis (N-acyl transfer). In terms of biological role, catalyzes the phospholipid dependent N-acylation of the N-terminal cysteine of apolipoprotein, the last step in lipoprotein maturation. Functionally, transfers mannose from GDP-mannose to lipid acceptors to form polyprenol monophosphomannose (PPM). PMM is an alkai-stable sugar donor which adds mannose-phosphate residues to triacylated-phosphatidyl-myo-inositol mannosides (PIM2), eventually leading to generation of the cell wall glycolipid lipoglycan modulins lipoarabinomannan (LAM) and lipomannan (LM). This chain is Bifunctional apolipoprotein N-acyltransferase/polyprenol monophosphomannose synthase, found in Mycobacterium bovis (strain BCG / Pasteur 1173P2).